A 514-amino-acid chain; its full sequence is Arabinose import ATP-binding protein AraG (514 aa).

2 ABC transporter domains span residues 16 to 251 (LRFN…MVGR) and 251 to 507 (RDIQ…LPRH). 48–55 (GENGAGKS) serves as a coordination point for ATP.

Belongs to the ABC transporter superfamily. Arabinose importer (TC 3.A.1.2.2) family. In terms of assembly, the complex is composed of two ATP-binding proteins (AraG), two transmembrane proteins (AraH) and a solute-binding protein (AraF).

Its subcellular location is the cell inner membrane. It catalyses the reaction L-arabinose(out) + ATP + H2O = L-arabinose(in) + ADP + phosphate + H(+). In terms of biological role, part of the ABC transporter complex AraFGH involved in arabinose import. Responsible for energy coupling to the transport system. The chain is Arabinose import ATP-binding protein AraG from Pseudomonas fluorescens (strain Pf0-1).